Reading from the N-terminus, the 97-residue chain is YcgL domain-containing protein PP_4590 (97 aa).

One can recognise a YcgL domain in the interval 3–87; sequence RICSIYKSPR…LEDEYIEHLP (85 aa).

In Pseudomonas putida (strain ATCC 47054 / DSM 6125 / CFBP 8728 / NCIMB 11950 / KT2440), this protein is YcgL domain-containing protein PP_4590.